The primary structure comprises 366 residues: Peptide chain release factor 2 (366 aa).

Gln253 is modified (N5-methylglutamine).

It belongs to the prokaryotic/mitochondrial release factor family. In terms of processing, methylated by PrmC. Methylation increases the termination efficiency of RF2.

The protein resides in the cytoplasm. In terms of biological role, peptide chain release factor 2 directs the termination of translation in response to the peptide chain termination codons UGA and UAA. The protein is Peptide chain release factor 2 of Yersinia pseudotuberculosis serotype I (strain IP32953).